The following is a 66-amino-acid chain: Neurotoxin BmK AGP-SYPU1 (66 aa).

Residues 2 to 64 (RDAYIAQNYN…KPIRIPGKCH (63 aa)) enclose the LCN-type CS-alpha/beta domain. Disulfide bonds link C12-C63, C16-C36, C22-C46, and C26-C48. A propeptide spans 65–66 (RR) (removed by a carboxypeptidase).

As to expression, expressed by the venom gland.

It localises to the secreted. Its function is as follows. Alpha toxins bind voltage-independently at site-3 of sodium channels (Nav) and inhibit the inactivation of the activated channels, thereby blocking neuronal transmission. This toxin has a strong analgesic effect when administered to mice by intraperitoneal injection. This chain is Neurotoxin BmK AGP-SYPU1, found in Olivierus martensii (Manchurian scorpion).